Here is a 1024-residue protein sequence, read N- to C-terminus: MFYAELFCQSNFSFLTGASHPEELIVQANFLGYHSLAITDECSLAGIVRAHSAIKQHQLSVKQIVGSFFKLNTECQFVLLCPNREAYAELCRIITNARRRCEKGQYQLSQWDVMSLKHCLLIWLPTGQTSDEQWATWLSRYQQSRLWLGLQRHLHHDDEHYLHHCQTLANQFDLPITACGGVLMHRPERLPLQHTLTAIRHGCTVEQLGTQLLTNAEQSLRSEKKLRKLFKPQWLAESLYIASLCSFDLDSLRYEYPSELIPDGYTPDSYLEHLVEQGKKLRFPEGVPDAIEQTIQKELALIKEQKYPFFFLTIHDIVMFAKQQGILYQGRGSAANSVVCYCLQITSVDPRQIAVLFERFISKERDEPPDIDVDFEHERREEVIQYIYQKYGRQRAALAATVISYRFKSAVRQVGKALGIEETQLDFFLKNINRRDRQAGWQVQLVELGLRPDSLKGQHFIQLVEEIIGFPRHLSQHVGGFVISSGPLYELVPVENAAMPERTIIQWDKDDLESLKLLKVDVLSLGMLTAIRKCFRSIEQHHQQRLSIADITRRQDDQAVYKMIQKADTIGVFQIESRAQMSMLPRLKPACYYDLVIQIAIVRPGPIQGDMVHPFLKRRDGEEPISYPSVHVQEVLERTLGVPIFQEQVIKLAMVAAGFSGGEADQLRRAMAAWKKNGHVFKFKTKLINGMLERGYELDFAERIFEQICGFGEYGFPESHSASFAVLAYCSAWLKHYYPAEFYTALLNSQPMGFYSPSQLVQDAKRHGIAVLPICVNFSNPEHQLVRLTSGELAIRLGFNLIKGLSHEGITRLLTHRPAQGYQCISEVKQILRQAKDIQSLASANAFYQLADNRYLARWQVMDNLDELPLFQTLPSISNNPLPKPSDYQNVLEDYAATGLSLAEHPVAMLEKAGGLTRFTRANQLNQCSHRSLVTVIGLVTGKQSPGTAAGVTFFTLEDDTGNINVVVWQATSRAQKQAYLTARLLMVKGILEREGDVIHVIAGRLVDLTEKLSGLSPKSREFH.

Belongs to the DNA polymerase type-C family. DnaE2 subfamily.

The protein resides in the cytoplasm. The catalysed reaction is DNA(n) + a 2'-deoxyribonucleoside 5'-triphosphate = DNA(n+1) + diphosphate. Its function is as follows. DNA polymerase involved in damage-induced mutagenesis and translesion synthesis (TLS). It is not the major replicative DNA polymerase. The polypeptide is Error-prone DNA polymerase (Vibrio vulnificus (strain YJ016)).